The sequence spans 502 residues: Glucose-6-phosphate isomerase (502 aa).

The Proton donor role is filled by glutamate 331. Active-site residues include histidine 362 and lysine 471.

It belongs to the GPI family.

It localises to the cytoplasm. It carries out the reaction alpha-D-glucose 6-phosphate = beta-D-fructose 6-phosphate. The protein operates within carbohydrate biosynthesis; gluconeogenesis. It participates in carbohydrate degradation; glycolysis; D-glyceraldehyde 3-phosphate and glycerone phosphate from D-glucose: step 2/4. Catalyzes the reversible isomerization of glucose-6-phosphate to fructose-6-phosphate. This is Glucose-6-phosphate isomerase from Xylella fastidiosa (strain 9a5c).